We begin with the raw amino-acid sequence, 417 residues long: MSLEAIQFDRSHRDDISVRVLDQLLLPYTTKYVPIYTIDDGYTVINTMQVRGAPAIAIVGALAVLMEIQLLQNDGFARTQTFYDISSFELTRSALSQRLDFLLSSRPTAVNLSNALREIRVLLAQSAGLAAFGNGVYDFVCRLIDEDLTNNVKMGDNGAAFLLDALQQEGFDEDFAVLTICNTGSLATSGYGTALGVVRSLWNDSLAKSQAPGDGSAKKRKLNQGRAKMVQVYPLETRPYNQGARLTAYELVHDQIPATLIPDSSIAYRIATSPVPIKAAFVGADRIVRNGDTANKIGTYQLALVCKHFGIKFFVTAPKTTIDSKTETGAGIVVEERKPNEFKHVSGTLIDSQTGLPCVDNQDKPVSASVGVAPSEIDVWNPAFDITPHELIDGIVTEDGVFTKSASGSFDLTNLFA.

D285 acts as the Proton donor in catalysis.

The protein belongs to the eIF-2B alpha/beta/delta subunits family. MtnA subfamily.

The protein localises to the cytoplasm. Its subcellular location is the nucleus. It carries out the reaction 5-(methylsulfanyl)-alpha-D-ribose 1-phosphate = 5-(methylsulfanyl)-D-ribulose 1-phosphate. The protein operates within amino-acid biosynthesis; L-methionine biosynthesis via salvage pathway; L-methionine from S-methyl-5-thio-alpha-D-ribose 1-phosphate: step 1/6. In terms of biological role, catalyzes the interconversion of methylthioribose-1-phosphate (MTR-1-P) into methylthioribulose-1-phosphate (MTRu-1-P). This Lachancea thermotolerans (strain ATCC 56472 / CBS 6340 / NRRL Y-8284) (Yeast) protein is Methylthioribose-1-phosphate isomerase.